The chain runs to 404 residues: Dihydrosphingosine 1-phosphate phosphatase YSR3 (404 aa).

Topologically, residues 1-86 are lumenal; sequence MTIIQTVTEL…PFRDVYFKYT (86 aa). N62 carries an N-linked (GlcNAc...) asparagine glycan. Residues 87-107 traverse the membrane as a helical segment; it reads SLMGSHMFYVIVLPMPVWLGY. Over 108 to 113 the chain is Cytoplasmic; the sequence is RDLTRD. Residues 114-134 traverse the membrane as a helical segment; sequence MIYVLGYSIYLSGYLKDYWCL. A phosphatase sequence motif I region spans residues 129 to 137; that stretch reads KDYWCLPRP. Topologically, residues 135–154 are lumenal; the sequence is PRPKSPPVDRITLSEYTTKE. Residues 155 to 176 form a helical membrane-spanning segment; it reads YGAPSSHSANATAVSLLFFWRI. Residues 158–161 form a phosphatase sequence motif II region; it reads PSSH. The Proton donor role is filled by H161. At 177–182 the chain is on the cytoplasmic side; it reads CLSDTL. A helical membrane pass occupies residues 183 to 203; it reads VWPTKLLLLSLVIFYYLTLVF. Over 204-215 the chain is Lumenal; that stretch reads GRVYCGMHGMLD. The phosphatase sequence motif III stretch occupies residues 204 to 215; the sequence is GRVYCGMHGMLD. H211 (nucleophile) is an active-site residue. A helical membrane pass occupies residues 216-236; sequence LFSGAAVGAICFFIRIWVVHA. Topologically, residues 237–241 are cytoplasmic; that stretch reads LRNFQ. The chain crosses the membrane as a helical span at residues 242 to 262; that stretch reads IGEHLWFPLLSVAWGLFILFN. Residues 263-319 lie on the Lumenal side of the membrane; it reads HVRPIDECPCFEDSVAFIGVVSGLDCSDWLTERYGWNLVCSRYASCGSKVFLRPLVG. A helical membrane pass occupies residues 320 to 340; the sequence is VASVIVWKDVISKTAVYTLLI. Residues 341–379 lie on the Cytoplasmic side of the membrane; sequence KLLRFHDDRSEKVHFHNETSEEEECLLYSGVSKVEIVGR. Residues 380–400 traverse the membrane as a helical segment; it reads FLIYAGIPTTVFLLCPVFFTW. The Lumenal segment spans residues 401 to 404; the sequence is TNLR.

Belongs to the type 2 lipid phosphate phosphatase family.

It is found in the endoplasmic reticulum membrane. It catalyses the reaction sphinganine 1-phosphate + H2O = sphinganine + phosphate. In terms of biological role, dihydrosphingosine 1-phosphate phosphatase required for efficient ceramide synthesis from exogenous sphingoid bases. Involved in endocytosis and calcium-mediated signaling. This is Dihydrosphingosine 1-phosphate phosphatase YSR3 from Saccharomyces cerevisiae (strain ATCC 204508 / S288c) (Baker's yeast).